Reading from the N-terminus, the 388-residue chain is Chorismate synthase (388 aa).

Positions 39 and 45 each coordinate NADP(+). Residues Arg-130–Ser-132, Asn-251–Ala-252, Gly-296, Lys-311–Thr-315, and Arg-337 each bind FMN.

It belongs to the chorismate synthase family. Homotetramer. FMNH2 serves as cofactor.

It catalyses the reaction 5-O-(1-carboxyvinyl)-3-phosphoshikimate = chorismate + phosphate. It functions in the pathway metabolic intermediate biosynthesis; chorismate biosynthesis; chorismate from D-erythrose 4-phosphate and phosphoenolpyruvate: step 7/7. Functionally, catalyzes the anti-1,4-elimination of the C-3 phosphate and the C-6 proR hydrogen from 5-enolpyruvylshikimate-3-phosphate (EPSP) to yield chorismate, which is the branch point compound that serves as the starting substrate for the three terminal pathways of aromatic amino acid biosynthesis. This reaction introduces a second double bond into the aromatic ring system. The sequence is that of Chorismate synthase from Streptococcus pyogenes serotype M12 (strain MGAS2096).